The sequence spans 475 residues: uncharacterized protein (475 aa).

Residues 19–39 (IKVGVFFVAILLILTGILLTI) form a helical membrane-spanning segment. Disordered regions lie at residues 55 to 79 (GEYH…NATS) and 330 to 350 (SSPF…PHKG). A compositionally biased stretch (polar residues) spans 60 to 79 (LNTSPNENSTALQPDENATS). Positions 336–348 (NRRHPVTGRIRPH) are enriched in basic residues. Histidine 348 is a Zn(2+) binding site.

The protein in the central section; belongs to the OapA family. In the C-terminal section; belongs to the peptidase M23B family. Zn(2+) serves as cofactor.

Its subcellular location is the cell membrane. This is an uncharacterized protein from Haemophilus influenzae (strain ATCC 51907 / DSM 11121 / KW20 / Rd).